Reading from the N-terminus, the 168-residue chain is PTS system glucose-specific EIIA component (168 aa).

The PTS EIIA type-1 domain maps to 38-142; the sequence is DEVFSNKIVG…STLTPVIISN (105 aa). Residues His75 and His90 each contribute to the Zn(2+) site. The Tele-phosphohistidine intermediate; for EIIA activity role is filled by His90. His90 is modified (phosphohistidine; by HPr).

Zn(2+) is required as a cofactor.

It localises to the cytoplasm. In terms of biological role, the phosphoenolpyruvate-dependent sugar phosphotransferase system (sugar PTS), a major carbohydrate active transport system, catalyzes the phosphorylation of incoming sugar substrates concomitantly with their translocation across the cell membrane. The enzyme II complex composed of PtsG and Crr is involved in glucose transport. This is PTS system glucose-specific EIIA component (crr) from Buchnera aphidicola subsp. Baizongia pistaciae (strain Bp).